The following is a 303-amino-acid chain: Secreted mono- and diacylglycerol lipase LIP4 (303 aa).

The N-terminal stretch at 1 to 16 (MHFLAFLLCLIPLALC) is a signal peptide. Cysteines 54 and 293 form a disulfide. Catalysis depends on S167, which acts as the Nucleophile. D224 is a catalytic residue.

This sequence belongs to the AB hydrolase superfamily. Lipase family. Class 3 subfamily.

It is found in the secreted. The enzyme catalyses a monoacylglycerol + H2O = glycerol + a fatty acid + H(+). The catalysed reaction is a diacylglycerol + H2O = a monoacylglycerol + a fatty acid + H(+). Secreted lipase involved in Dandruff and seborrheic dermatitis (D/SD) probably via lipase-mediated breakdown of sebaceous lipids and release of irritating free fatty acids. Shows activity against monoglyceride and diglyceride substrates. Due to an absence of fatty acid synthase genes in Malassezia species, secretory lipases are essential for the yeast to generate free fatty acids from degradation of sebum and assimilate them as lipid sources for growth. Plays an essential role at the pathogen-host interface during disease progression. This chain is Secreted mono- and diacylglycerol lipase LIP4, found in Malassezia restricta (strain ATCC 96810 / NBRC 103918 / CBS 7877) (Seborrheic dermatitis infection agent).